Here is a 494-residue protein sequence, read N- to C-terminus: Xylan glycosyltransferase MUCI21 (494 aa).

Topologically, residues 1–40 (MRQNLKKVAQIKVDESKKLFPYVFRVKTSCGNCAKRSKPK) are cytoplasmic. Residues 41 to 61 (LIYLLIFSLISSCFVFAPQLL) traverse the membrane as a helical; Signal-anchor for type II membrane protein segment. The Lumenal portion of the chain corresponds to 62 to 494 (CFPYPSALFL…LIDAYAKSIR (433 aa)). N-linked (GlcNAc...) asparagine glycosylation occurs at Asn375.

Belongs to the glycosyltransferase 61 family.

It localises to the golgi apparatus membrane. Functionally, glycosyletransferase required for the proper composition and structural properties of released seed coat mucilage. Required for the production of highly branched xylan polymers in seed coat mucilage. Facilitates the addition of xylose residues directly to the xylan backbone. Xylan with xylose side chains seems to be necessary for pectin attachment to the seed surface. Essential for xylan synthesis in seed coat epidermal (SCE) cells. This chain is Xylan glycosyltransferase MUCI21, found in Arabidopsis thaliana (Mouse-ear cress).